The chain runs to 304 residues: Nucleotide-binding protein RHA1_ro07174 (304 aa).

Residue 24–31 (GLSGAGLQ) coordinates ATP. A GTP-binding site is contributed by 75-78 (DVRS).

It belongs to the RapZ-like family.

Functionally, displays ATPase and GTPase activities. The polypeptide is Nucleotide-binding protein RHA1_ro07174 (Rhodococcus jostii (strain RHA1)).